A 751-amino-acid chain; its full sequence is Photosystem I P700 chlorophyll a apoprotein A1 (751 aa).

The next 8 membrane-spanning stretches (helical) occupy residues 73–96 (VFSA…FHGA), 159–182 (LYAT…FHYH), 198–222 (MNHH…HISL), 294–312 (EAHH…GHQY), 349–372 (WHAQ…HHMY), 388–414 (LSLF…IFMV), 436–458 (AIIS…LYIH), and 533–551 (FLVH…LILL). [4Fe-4S] cluster-binding residues include Cys-575 and Cys-584. Transmembrane regions (helical) follow at residues 591-612 (HVFL…HFSW) and 665-687 (LSAY…MFLF). His-676 is a binding site for chlorophyll a'. Residues Met-684 and Tyr-692 each contribute to the chlorophyll a site. Trp-693 serves as a coordination point for phylloquinone. A helical membrane pass occupies residues 725–745 (AVGVAHYLLGGIATTWSFFLA).

This sequence belongs to the PsaA/PsaB family. As to quaternary structure, the PsaA/B heterodimer binds the P700 chlorophyll special pair and subsequent electron acceptors. PSI consists of a core antenna complex that captures photons, and an electron transfer chain that converts photonic excitation into a charge separation. The eukaryotic PSI reaction center is composed of at least 11 subunits. It depends on P700 is a chlorophyll a/chlorophyll a' dimer, A0 is one or more chlorophyll a, A1 is one or both phylloquinones and FX is a shared 4Fe-4S iron-sulfur center. as a cofactor.

It is found in the plastid. The protein resides in the chloroplast thylakoid membrane. It catalyses the reaction reduced [plastocyanin] + hnu + oxidized [2Fe-2S]-[ferredoxin] = oxidized [plastocyanin] + reduced [2Fe-2S]-[ferredoxin]. PsaA and PsaB bind P700, the primary electron donor of photosystem I (PSI), as well as the electron acceptors A0, A1 and FX. PSI is a plastocyanin/cytochrome c6-ferredoxin oxidoreductase, converting photonic excitation into a charge separation, which transfers an electron from the donor P700 chlorophyll pair to the spectroscopically characterized acceptors A0, A1, FX, FA and FB in turn. Oxidized P700 is reduced on the lumenal side of the thylakoid membrane by plastocyanin or cytochrome c6. The protein is Photosystem I P700 chlorophyll a apoprotein A1 of Oltmannsiellopsis viridis (Marine flagellate).